A 536-amino-acid polypeptide reads, in one-letter code: Probable pectinesterase/pectinesterase inhibitor 59 (536 aa).

A signal peptide spans 1–30 (MNMMMQKLSILFLHLILLVLLCVHPLTTVA). The interval 31–183 (DRNSTDWCDK…SHLISNCLAV (153 aa)) is pectinesterase inhibitor 59. N-linked (GlcNAc...) asparagine glycosylation is found at N33, N91, N116, N159, and N195. The segment at 221–522 (NLVVAKDGSG…FTVGKFIAGT (302 aa)) is pectinesterase 59. The substrate site is built by T298 and Q328. D351 acts as the Proton donor; for pectinesterase activity in catalysis. C365 and C385 are joined by a disulfide. The active-site Nucleophile; for pectinesterase activity is D372. The substrate site is built by R440 and W442.

It in the N-terminal section; belongs to the PMEI family. This sequence in the C-terminal section; belongs to the pectinesterase family. As to expression, expressed in siliques.

Its subcellular location is the secreted. The protein localises to the cell wall. The catalysed reaction is [(1-&gt;4)-alpha-D-galacturonosyl methyl ester](n) + n H2O = [(1-&gt;4)-alpha-D-galacturonosyl](n) + n methanol + n H(+). It functions in the pathway glycan metabolism; pectin degradation; 2-dehydro-3-deoxy-D-gluconate from pectin: step 1/5. Functionally, acts in the modification of cell walls via demethylesterification of cell wall pectin. The polypeptide is Probable pectinesterase/pectinesterase inhibitor 59 (PME59) (Arabidopsis thaliana (Mouse-ear cress)).